The chain runs to 545 residues: Chaperonin GroEL 2 (545 aa).

ATP contacts are provided by residues 29–32 (TLGP), 86–90 (DGTTT), Gly413, 479–481 (NAA), and Asp495.

This sequence belongs to the chaperonin (HSP60) family. Forms a cylinder of 14 subunits composed of two heptameric rings stacked back-to-back. Interacts with the co-chaperonin GroES.

The protein localises to the cytoplasm. It carries out the reaction ATP + H2O + a folded polypeptide = ADP + phosphate + an unfolded polypeptide.. Together with its co-chaperonin GroES, plays an essential role in assisting protein folding. The GroEL-GroES system forms a nano-cage that allows encapsulation of the non-native substrate proteins and provides a physical environment optimized to promote and accelerate protein folding. In Prochlorococcus marinus (strain MIT 9301), this protein is Chaperonin GroEL 2.